The following is an 850-amino-acid chain: Trimethylamine-N-oxide reductase (850 aa).

Residues 1–39 (MKNKDSLHVSRRRFLAQLGGLTVAGMLGPSLLTPRSARA) constitute a signal peptide (tat-type signal). Mo-bis(molybdopterin guanine dinucleotide) is bound at residue S191.

The protein belongs to the prokaryotic molybdopterin-containing oxidoreductase family. It depends on Mo-bis(molybdopterin guanine dinucleotide) as a cofactor. Predicted to be exported by the Tat system. The position of the signal peptide cleavage has not been experimentally proven.

The protein localises to the periplasm. It carries out the reaction trimethylamine + 2 Fe(III)-[cytochrome c] + H2O = trimethylamine N-oxide + 2 Fe(II)-[cytochrome c] + 3 H(+). Functionally, reduces trimethylamine-N-oxide (TMAO) into trimethylamine; an anaerobic reaction coupled to energy-yielding reactions. The sequence is that of Trimethylamine-N-oxide reductase (torA) from Salmonella typhi.